Consider the following 91-residue polypeptide: Sec-independent protein translocase protein TatA (91 aa).

A helical transmembrane segment spans residues 1–21 (MGIFDWKHWIVILIVVVLVFG). The segment at 42-91 (AMHDDDKPAEQPAPQPQQAQPAPQGSPLNQPHTIDAQAHKVDEPIRKDQV) is disordered. Residues 51–64 (EQPAPQPQQAQPAP) are compositionally biased toward low complexity. The segment covering 78 to 91 (QAHKVDEPIRKDQV) has biased composition (basic and acidic residues).

It belongs to the TatA/E family. As to quaternary structure, the Tat system comprises two distinct complexes: a TatABC complex, containing multiple copies of TatA, TatB and TatC subunits, and a separate TatA complex, containing only TatA subunits. Substrates initially bind to the TatABC complex, which probably triggers association of the separate TatA complex to form the active translocon.

It localises to the cell inner membrane. In terms of biological role, part of the twin-arginine translocation (Tat) system that transports large folded proteins containing a characteristic twin-arginine motif in their signal peptide across membranes. TatA could form the protein-conducting channel of the Tat system. In Pseudomonas syringae pv. tomato (strain ATCC BAA-871 / DC3000), this protein is Sec-independent protein translocase protein TatA.